A 156-amino-acid polypeptide reads, in one-letter code: Small ribosomal subunit protein uS7 (156 aa).

Belongs to the universal ribosomal protein uS7 family. In terms of assembly, part of the 30S ribosomal subunit. Contacts proteins S9 and S11.

One of the primary rRNA binding proteins, it binds directly to 16S rRNA where it nucleates assembly of the head domain of the 30S subunit. Is located at the subunit interface close to the decoding center, probably blocks exit of the E-site tRNA. This chain is Small ribosomal subunit protein uS7, found in Acinetobacter baylyi (strain ATCC 33305 / BD413 / ADP1).